The following is a 1040-amino-acid chain: Contactin-2 (1040 aa).

Positions 1–30 (MGTATRRKPHLLLVAAVALVSSSAWSSALG) are cleaved as a signal peptide. Ig-like C2-type domains lie at 43–128 (PLSV…AILR), 133–222 (QEFS…SVFS), 239–322 (PSIK…GRII), 327–411 (PEWL…AELA), 417–504 (PDFR…GILS), and 509–603 (TKIT…ATVL). 4 cysteine pairs are disulfide-bonded: Cys61/Cys111, Cys155/Cys207, Cys261/Cys306, and Cys348/Cys395. Residues Asn76, Asn198, and Asn204 are each glycosylated (N-linked (GlcNAc...) asparagine). Asn461, Asn477, Asn498, and Asn525 each carry an N-linked (GlcNAc...) asparagine glycan. Fibronectin type-III domains are found at residues 610 to 708 (PPGG…TREA), 713 to 810 (APSG…SAEE), 815 to 910 (APTK…TMKP), and 915 to 1006 (PPGN…NGGT). Residues 694–720 (GEPSGPSSKIRTREAAPSVAPSGLSGG) form a disordered region. Residues 794–796 (RGD) carry the Cell attachment site motif. N-linked (GlcNAc...) asparagine glycans are attached at residues Asn830, Asn904, Asn918, and Asn940. The segment at 894 to 919 (AGTGPASPSANATTMKPPPRRPPGNI) is disordered. Asn1012 carries the GPI-anchor amidated asparagine lipid modification. Positions 1013–1040 (MAVRPAPHPGTVISHSVAMLILIGSLEL) are cleaved as a propeptide — removed in mature form.

This sequence belongs to the immunoglobulin superfamily. Contactin family.

It is found in the cell membrane. In terms of biological role, in conjunction with another transmembrane protein, CNTNAP2, contributes to the organization of axonal domains at nodes of Ranvier by maintaining voltage-gated potassium channels at the juxtaparanodal region. May be involved in cell adhesion. This is Contactin-2 (CNTN2) from Homo sapiens (Human).